The primary structure comprises 437 residues: Transcription factor AP-2-alpha (437 aa).

A Glycyl lysine isopeptide (Lys-Gly) (interchain with G-Cter in SUMO); alternate cross-link involves residue Lys10. Lys10 participates in a covalent cross-link: Glycyl lysine isopeptide (Lys-Gly) (interchain with G-Cter in SUMO2); alternate. A disordered region spans residues 14–107; it reads CEDRHDGTSN…GQRQSQESGL (94 aa). The short motif at 57–62 is the PPxY motif element; sequence YFPPPY. Composition is skewed to low complexity over residues 65-74 and 88-101; these read IYPQSQDPYS and QPQP…GQRQ. Glycyl lysine isopeptide (Lys-Gly) (interchain with G-Cter in SUMO2) cross-links involve residues Lys177 and Lys184. Ser239 bears the Phosphoserine; by PKA mark. Residues 280-410 are H-S-H (helix-span-helix), dimerization; the sequence is RRKAANVTLL…YLTEALKAMD (131 aa). A compositionally biased stretch (polar residues) spans 414–427; the sequence is LSNNPNSHTDNNAK. The interval 414 to 437 is disordered; it reads LSNNPNSHTDNNAKSSDKEEKHRK. Basic and acidic residues predominate over residues 428–437; the sequence is SSDKEEKHRK.

This sequence belongs to the AP-2 family. As to quaternary structure, binds DNA as a dimer. Can form homodimers or heterodimers with other AP-2 family members. Interacts with WWOX. Interacts with CITED4. Interacts with UBE2I. Interacts with RALBP1 in a complex also containing EPN1 and NUMB during interphase and mitosis. Interacts with KCTD1; this interaction represses transcription activation. Interacts (via C-terminus) with CITED2 (via C-terminus); the interaction stimulates TFAP2A-transcriptional activation. Interacts (via N-terminus) with EP300 (via N-terminus); the interaction requires CITED2. Interacts with KCTD15; this interaction inhibits TFAP2A transcriptional activation. Post-translationally, sumoylated on Lys-10; which inhibits transcriptional activity.

Its subcellular location is the nucleus. Functionally, sequence-specific DNA-binding protein that interacts with inducible viral and cellular enhancer elements to regulate transcription of selected genes. AP-2 factors bind to the consensus sequence 5'-GCCNNNGGC-3' and activate genes involved in a large spectrum of important biological functions including proper eye, face, body wall, limb and neural tube development. They also suppress a number of genes including MCAM/MUC18, C/EBP alpha and MYC. AP-2-alpha is the only AP-2 protein required for early morphogenesis of the lens vesicle. Together with the CITED2 coactivator, stimulates the PITX2 P1 promoter transcription activation. Associates with chromatin to the PITX2 P1 promoter region. This chain is Transcription factor AP-2-alpha (TFAP2A), found in Homo sapiens (Human).